A 269-amino-acid polypeptide reads, in one-letter code: Undecaprenyl-diphosphatase (269 aa).

8 helical membrane passes run 4–24 (IELW…WLPI), 50–70 (LWLH…PYWL), 86–106 (LFAI…YKVL), 113–133 (ATGD…GLLL), 146–166 (VNVV…IPGI), 186–206 (AVWL…ALEL), 220–240 (WMVT…EVLL), and 246–266 (LDFS…PLAA).

Belongs to the UppP family.

The protein localises to the cell membrane. It catalyses the reaction di-trans,octa-cis-undecaprenyl diphosphate + H2O = di-trans,octa-cis-undecaprenyl phosphate + phosphate + H(+). Catalyzes the dephosphorylation of undecaprenyl diphosphate (UPP). The protein is Undecaprenyl-diphosphatase of Methanopyrus kandleri (strain AV19 / DSM 6324 / JCM 9639 / NBRC 100938).